Here is a 569-residue protein sequence, read N- to C-terminus: Arginine--tRNA ligase (569 aa).

The short motif at A123–H133 is the 'HIGH' region element.

The protein belongs to the class-I aminoacyl-tRNA synthetase family.

The protein localises to the cytoplasm. The catalysed reaction is tRNA(Arg) + L-arginine + ATP = L-arginyl-tRNA(Arg) + AMP + diphosphate. The protein is Arginine--tRNA ligase of Methanosarcina mazei (strain ATCC BAA-159 / DSM 3647 / Goe1 / Go1 / JCM 11833 / OCM 88) (Methanosarcina frisia).